Consider the following 210-residue polypeptide: Pyridoxine/pyridoxamine 5'-phosphate oxidase (210 aa).

Substrate-binding positions include 7–10 (RDEY) and Lys-65. FMN is bound by residues 60–65 (RMVLLK), 75–76 (FT), Arg-81, Lys-82, and Gln-104. Residues Tyr-122, Arg-126, and Ser-130 each coordinate substrate. Residues 139-140 (QS) and Trp-183 each bind FMN. A substrate-binding site is contributed by 189–191 (RLH). Arg-193 lines the FMN pocket.

This sequence belongs to the pyridoxamine 5'-phosphate oxidase family. Homodimer. FMN is required as a cofactor.

It catalyses the reaction pyridoxamine 5'-phosphate + O2 + H2O = pyridoxal 5'-phosphate + H2O2 + NH4(+). The catalysed reaction is pyridoxine 5'-phosphate + O2 = pyridoxal 5'-phosphate + H2O2. Its pathway is cofactor metabolism; pyridoxal 5'-phosphate salvage; pyridoxal 5'-phosphate from pyridoxamine 5'-phosphate: step 1/1. It functions in the pathway cofactor metabolism; pyridoxal 5'-phosphate salvage; pyridoxal 5'-phosphate from pyridoxine 5'-phosphate: step 1/1. In terms of biological role, catalyzes the oxidation of either pyridoxine 5'-phosphate (PNP) or pyridoxamine 5'-phosphate (PMP) into pyridoxal 5'-phosphate (PLP). In Haemophilus influenzae (strain 86-028NP), this protein is Pyridoxine/pyridoxamine 5'-phosphate oxidase.